Here is a 279-residue protein sequence, read N- to C-terminus: 4-diphosphocytidyl-2-C-methyl-D-erythritol kinase (279 aa).

Lys9 is a catalytic residue. Residue 92-102 participates in ATP binding; it reads PLAAGLGGGSS. The active site involves Asp134.

The protein belongs to the GHMP kinase family. IspE subfamily.

The enzyme catalyses 4-CDP-2-C-methyl-D-erythritol + ATP = 4-CDP-2-C-methyl-D-erythritol 2-phosphate + ADP + H(+). Its pathway is isoprenoid biosynthesis; isopentenyl diphosphate biosynthesis via DXP pathway; isopentenyl diphosphate from 1-deoxy-D-xylulose 5-phosphate: step 3/6. Catalyzes the phosphorylation of the position 2 hydroxy group of 4-diphosphocytidyl-2C-methyl-D-erythritol. This chain is 4-diphosphocytidyl-2-C-methyl-D-erythritol kinase, found in Syntrophus aciditrophicus (strain SB).